A 326-amino-acid polypeptide reads, in one-letter code: Beta-ketoacyl-[acyl-carrier-protein] synthase III (326 aa).

Residues Cys-120 and His-253 contribute to the active site. An ACP-binding region spans residues 254–258 (QANIR). The active site involves Asn-283.

It belongs to the thiolase-like superfamily. FabH family. As to quaternary structure, homodimer.

Its subcellular location is the cytoplasm. It catalyses the reaction malonyl-[ACP] + acetyl-CoA + H(+) = 3-oxobutanoyl-[ACP] + CO2 + CoA. Its pathway is lipid metabolism; fatty acid biosynthesis. Its function is as follows. Catalyzes the condensation reaction of fatty acid synthesis by the addition to an acyl acceptor of two carbons from malonyl-ACP. Catalyzes the first condensation reaction which initiates fatty acid synthesis and may therefore play a role in governing the total rate of fatty acid production. Possesses both acetoacetyl-ACP synthase and acetyl transacylase activities. Its substrate specificity determines the biosynthesis of branched-chain and/or straight-chain of fatty acids. The sequence is that of Beta-ketoacyl-[acyl-carrier-protein] synthase III from Cupriavidus necator (strain ATCC 17699 / DSM 428 / KCTC 22496 / NCIMB 10442 / H16 / Stanier 337) (Ralstonia eutropha).